The primary structure comprises 196 residues: NADH-quinone oxidoreductase subunit B (196 aa).

4 residues coordinate [4Fe-4S] cluster: cysteine 75, cysteine 76, cysteine 140, and cysteine 170.

The protein belongs to the complex I 20 kDa subunit family. In terms of assembly, NDH-1 is composed of 14 different subunits. Subunits NuoB, C, D, E, F, and G constitute the peripheral sector of the complex. Requires [4Fe-4S] cluster as cofactor.

The protein resides in the cell inner membrane. It carries out the reaction a quinone + NADH + 5 H(+)(in) = a quinol + NAD(+) + 4 H(+)(out). NDH-1 shuttles electrons from NADH, via FMN and iron-sulfur (Fe-S) centers, to quinones in the respiratory chain. Couples the redox reaction to proton translocation (for every two electrons transferred, four hydrogen ions are translocated across the cytoplasmic membrane), and thus conserves the redox energy in a proton gradient. The sequence is that of NADH-quinone oxidoreductase subunit B from Caulobacter sp. (strain K31).